The sequence spans 168 residues: S-ribosylhomocysteine lyase (168 aa).

Positions 54, 58, and 128 each coordinate Fe cation.

It belongs to the LuxS family. Homodimer. Fe cation is required as a cofactor.

It catalyses the reaction S-(5-deoxy-D-ribos-5-yl)-L-homocysteine = (S)-4,5-dihydroxypentane-2,3-dione + L-homocysteine. Its function is as follows. Involved in the synthesis of autoinducer 2 (AI-2) which is secreted by bacteria and is used to communicate both the cell density and the metabolic potential of the environment. The regulation of gene expression in response to changes in cell density is called quorum sensing. Catalyzes the transformation of S-ribosylhomocysteine (RHC) to homocysteine (HC) and 4,5-dihydroxy-2,3-pentadione (DPD). The chain is S-ribosylhomocysteine lyase from Neisseria meningitidis serogroup C / serotype 2a (strain ATCC 700532 / DSM 15464 / FAM18).